Reading from the N-terminus, the 375-residue chain is Chaperone protein DnaJ (375 aa).

The J domain occupies 5–69 (DYYEILGVSK…QKRAAYDQYG (65 aa)). The segment at 130-208 (GVTKEIRIPT…CHGHGRVEKA (79 aa)) adopts a CR-type zinc-finger fold. Zn(2+)-binding residues include Cys-143, Cys-146, Cys-160, Cys-163, Cys-182, Cys-185, Cys-196, and Cys-199. CXXCXGXG motif repeat units follow at residues 143 to 150 (CGVCHGSG), 160 to 167 (CPTCHGQG), 182 to 189 (CPHCHGRG), and 196 to 203 (CNSCHGHG).

Belongs to the DnaJ family. As to quaternary structure, homodimer. It depends on Zn(2+) as a cofactor.

Its subcellular location is the cytoplasm. Functionally, participates actively in the response to hyperosmotic and heat shock by preventing the aggregation of stress-denatured proteins and by disaggregating proteins, also in an autonomous, DnaK-independent fashion. Unfolded proteins bind initially to DnaJ; upon interaction with the DnaJ-bound protein, DnaK hydrolyzes its bound ATP, resulting in the formation of a stable complex. GrpE releases ADP from DnaK; ATP binding to DnaK triggers the release of the substrate protein, thus completing the reaction cycle. Several rounds of ATP-dependent interactions between DnaJ, DnaK and GrpE are required for fully efficient folding. Also involved, together with DnaK and GrpE, in the DNA replication of plasmids through activation of initiation proteins. The chain is Chaperone protein DnaJ from Serratia proteamaculans (strain 568).